Consider the following 135-residue polypeptide: Glutaredoxin-C4 (135 aa).

A Glutaredoxin domain is found at 32-132 (ADFVKKTISS…KLLGVSGNKE (101 aa)). C52 and C55 are disulfide-bonded.

Belongs to the glutaredoxin family. CPYC subfamily.

Its subcellular location is the cytoplasm. Has a glutathione-disulfide oxidoreductase activity in the presence of NADPH and glutathione reductase. Reduces low molecular weight disulfides and proteins. The protein is Glutaredoxin-C4 (GRXC4) of Arabidopsis thaliana (Mouse-ear cress).